The following is a 450-amino-acid chain: Ribulose bisphosphate carboxylase large chain (450 aa).

Position 4 is an N6,N6,N6-trimethyllysine (K4). Substrate-binding residues include N113 and T163. Catalysis depends on K165, which acts as the Proton acceptor. K167 serves as a coordination point for substrate. Mg(2+) contacts are provided by K191, D193, and E194. K191 is modified (N6-carboxylysine). The Proton acceptor role is filled by H284. Substrate contacts are provided by R285, H317, and S369.

It belongs to the RuBisCO large chain family. Type I subfamily. Heterohexadecamer of 8 large chains and 8 small chains; disulfide-linked. The disulfide link is formed within the large subunit homodimers. The cofactor is Mg(2+). Post-translationally, the disulfide bond which can form in the large chain dimeric partners within the hexadecamer appears to be associated with oxidative stress and protein turnover.

The protein resides in the plastid. The protein localises to the chloroplast. It carries out the reaction 2 (2R)-3-phosphoglycerate + 2 H(+) = D-ribulose 1,5-bisphosphate + CO2 + H2O. The enzyme catalyses D-ribulose 1,5-bisphosphate + O2 = 2-phosphoglycolate + (2R)-3-phosphoglycerate + 2 H(+). Its function is as follows. RuBisCO catalyzes two reactions: the carboxylation of D-ribulose 1,5-bisphosphate, the primary event in carbon dioxide fixation, as well as the oxidative fragmentation of the pentose substrate in the photorespiration process. Both reactions occur simultaneously and in competition at the same active site. This chain is Ribulose bisphosphate carboxylase large chain, found in Crassula rupestris subsp. marnieriana (Pygmyweed).